The sequence spans 57 residues: UPF0391 membrane protein azo1765 (57 aa).

2 helical membrane passes run 1 to 21 (MIKW…FGFT) and 33 to 53 (VLFF…VGLG).

This sequence belongs to the UPF0391 family.

It is found in the cell membrane. The polypeptide is UPF0391 membrane protein azo1765 (Azoarcus sp. (strain BH72)).